A 639-amino-acid polypeptide reads, in one-letter code: 1-deoxy-D-xylulose-5-phosphate synthase (639 aa).

Thiamine diphosphate is bound by residues His79 and 120–122 (AHS). Position 151 (Asp151) interacts with Mg(2+). Thiamine diphosphate contacts are provided by residues 152–153 (GA), Asn180, Tyr289, and Glu371. Asn180 contributes to the Mg(2+) binding site.

This sequence belongs to the transketolase family. DXPS subfamily. In terms of assembly, homodimer. The cofactor is Mg(2+). Thiamine diphosphate serves as cofactor.

It carries out the reaction D-glyceraldehyde 3-phosphate + pyruvate + H(+) = 1-deoxy-D-xylulose 5-phosphate + CO2. It participates in metabolic intermediate biosynthesis; 1-deoxy-D-xylulose 5-phosphate biosynthesis; 1-deoxy-D-xylulose 5-phosphate from D-glyceraldehyde 3-phosphate and pyruvate: step 1/1. In terms of biological role, catalyzes the acyloin condensation reaction between C atoms 2 and 3 of pyruvate and glyceraldehyde 3-phosphate to yield 1-deoxy-D-xylulose-5-phosphate (DXP). The chain is 1-deoxy-D-xylulose-5-phosphate synthase from Allorhizobium ampelinum (strain ATCC BAA-846 / DSM 112012 / S4) (Agrobacterium vitis (strain S4)).